We begin with the raw amino-acid sequence, 430 residues long: Glutamate-1-semialdehyde 2,1-aminomutase (430 aa).

An N6-(pyridoxal phosphate)lysine modification is found at Lys270.

The protein belongs to the class-III pyridoxal-phosphate-dependent aminotransferase family. HemL subfamily. Homodimer. The cofactor is pyridoxal 5'-phosphate.

It localises to the cytoplasm. The catalysed reaction is (S)-4-amino-5-oxopentanoate = 5-aminolevulinate. It participates in porphyrin-containing compound metabolism; protoporphyrin-IX biosynthesis; 5-aminolevulinate from L-glutamyl-tRNA(Glu): step 2/2. The protein is Glutamate-1-semialdehyde 2,1-aminomutase of Cupriavidus metallidurans (strain ATCC 43123 / DSM 2839 / NBRC 102507 / CH34) (Ralstonia metallidurans).